A 482-amino-acid chain; its full sequence is Membrane-bound lytic murein transglycosylase F (482 aa).

The N-terminal stretch at methionine 1 to alanine 18 is a signal peptide. A non-LT domain region spans residues isoleucine 19–isoleucine 267. Residues serine 268–aspartate 482 are LT domain. Residue glutamate 312 is part of the active site. Positions glutamate 457–alanine 470 are enriched in polar residues. The interval glutamate 457–aspartate 482 is disordered. Over residues asparagine 473–aspartate 482 the composition is skewed to basic and acidic residues.

In the N-terminal section; belongs to the bacterial solute-binding protein 3 family. It in the C-terminal section; belongs to the transglycosylase Slt family.

The protein resides in the cell outer membrane. The catalysed reaction is Exolytic cleavage of the (1-&gt;4)-beta-glycosidic linkage between N-acetylmuramic acid (MurNAc) and N-acetylglucosamine (GlcNAc) residues in peptidoglycan, from either the reducing or the non-reducing ends of the peptidoglycan chains, with concomitant formation of a 1,6-anhydrobond in the MurNAc residue.. Murein-degrading enzyme that degrades murein glycan strands and insoluble, high-molecular weight murein sacculi, with the concomitant formation of a 1,6-anhydromuramoyl product. Lytic transglycosylases (LTs) play an integral role in the metabolism of the peptidoglycan (PG) sacculus. Their lytic action creates space within the PG sacculus to allow for its expansion as well as for the insertion of various structures such as secretion systems and flagella. The sequence is that of Membrane-bound lytic murein transglycosylase F from Haemophilus influenzae (strain 86-028NP).